The sequence spans 705 residues: DNA polymerase alpha subunit B (705 aa).

A disordered region spans residues 115–199 (KKRKLHGPFS…TPTTSRQNVP (85 aa)). Positions 125–134 (LSDSKQTYNV) are enriched in polar residues. S126 bears the Phosphoserine mark. Low complexity predominate over residues 181–197 (STFQTPTTNTPTTSRQN).

This sequence belongs to the DNA polymerase alpha subunit B family. In terms of assembly, DNA polymerase alpha:primase is a four subunit enzyme complex, which is assembled throughout the cell cycle, and consists of the two DNA polymerase subunits A POL1 and B POL12, and the DNA primase large PRI2 and small PRI1 subunits. Subunit B POL12 binds to subunit A POL1. Post-translationally, phosphorylated in a cell cycle-dependent manner.

The protein localises to the nucleus. Functionally, non-catalytic component of DNA polymerase alpha, which in a complex with DNA primase (DNA polymerase alpha:primase) constitutes a replicative polymerase. POL12 may play an essential role at the early stage of chromosomal DNA replication by coupling DNA polymerase alpha to the cellular replication machinery. Interacts with MCM10. In Saccharomyces cerevisiae (strain ATCC 204508 / S288c) (Baker's yeast), this protein is DNA polymerase alpha subunit B (POL12).